A 491-amino-acid chain; its full sequence is mRNA cleavage and polyadenylation factor clp1 (491 aa).

Glutamate 28 and lysine 78 together coordinate ATP. Positions 128–160 are disordered; that stretch reads RAAAAQAQQQHPTHHQQQQQGRGAGAGVARSKP. The segment covering 130-148 has biased composition (low complexity); that stretch reads AAAQAQQQHPTHHQQQQQG. 171-176 lines the ATP pocket; it reads GVGKTS.

The protein belongs to the Clp1 family. Clp1 subfamily. As to quaternary structure, component of a pre-mRNA cleavage factor complex. Interacts directly with PCF11.

Its subcellular location is the nucleus. Its function is as follows. Required for endonucleolytic cleavage during polyadenylation-dependent pre-mRNA 3'-end formation. The chain is mRNA cleavage and polyadenylation factor clp1 (paa-7) from Neurospora crassa (strain ATCC 24698 / 74-OR23-1A / CBS 708.71 / DSM 1257 / FGSC 987).